The following is a 1124-amino-acid chain: ATP-dependent DNA helicase mph1 (1124 aa).

Disordered stretches follow at residues 1 to 103 (MFTL…EARS) and 123 to 302 (QLTQ…PTQH). Composition is skewed to acidic residues over residues 7–17 (DSSDYFDDDLG) and 169–178 (RDDEYDDDEE). The span at 210–222 (TPIIGQQSTTIEA) shows a compositional bias: polar residues. The span at 226–236 (LLDDIPDDAFD) shows a compositional bias: acidic residues. Positions 255 to 271 (SFTQSTNRPLGVRQTTL) are enriched in polar residues. The 169-residue stretch at 328–496 (IAQKGLFHNL…AVIDGLDISR (169 aa)) folds into the Helicase ATP-binding domain. An ATP-binding site is contributed by 341–348 (LPTGLGKT). The short motif at 444-447 (DEAH) is the DEAH box element. In terms of domain architecture, Helicase C-terminal spans 666–840 (YLKQVVLNHF…GTRFTFHDDM (175 aa)). The segment covering 855–873 (KRAIDIPEENTVRDLPEPK) has biased composition (basic and acidic residues). Disordered regions lie at residues 855–923 (KRAI…TPEP) and 1016–1124 (MPKA…DSDD). 2 stretches are compositionally biased toward basic residues: residues 874 to 886 (RRGRAPKRPPKKF) and 906 to 916 (SKRRVPNKSKA).

Belongs to the DEAD box helicase family. DEAH subfamily. FANCM sub-subfamily. Interacts with the MHF histone-fold complex to form the FANCM-MHF complex.

The protein localises to the nucleus. It catalyses the reaction ATP + H2O = ADP + phosphate + H(+). ATP-dependent DNA helicase involved in DNA damage repair by homologous recombination and in genome maintenance. Capable of unwinding D-loops. Plays a role in limiting crossover recombinants during mitotic DNA double-strand break (DSB) repair. Component of a FANCM-MHF complex which promotes gene conversion at blocked replication forks, probably by reversal of the stalled fork. This chain is ATP-dependent DNA helicase mph1, found in Aspergillus niger (strain ATCC MYA-4892 / CBS 513.88 / FGSC A1513).